The following is a 175-amino-acid chain: Protein FanH (175 aa).

The N-terminal stretch at Met-1–Ala-20 is a signal peptide. Cys-39 and Cys-77 are disulfide-bonded.

It is found in the fimbrium. Involved in the biosynthesis of K99 fimbriae. The chain is Protein FanH (fanH) from Escherichia coli.